Consider the following 139-residue polypeptide: MNHYSVLNLKDGKTYTDDEIKEAYRKALLLFHPDKCKEKPSVVYTIDQVKEAYQVLSSEKDRQQYQIKQEEESSHYYSIVDLSEFEELDNGSYYYPCRCGDLGGYVVTEDDLENNRSVVPCMGCSLTIQVDYEIAESDS.

A J domain is found at 2-69 (NHYSVLNLKD…KDRQQYQIKQ (68 aa)). Residues 76–133 (YYSIVDLSEFEELDNGSYYYPCRCGDLGGYVVTEDDLENNRSVVPCMGCSLTIQVDYE) form the DPH-type MB domain. Zn(2+)-binding residues include C97, C99, C121, and C124.

This sequence belongs to the DPH4 family.

It localises to the cytoplasm. The protein resides in the nucleus. It functions in the pathway protein modification; peptidyl-diphthamide biosynthesis. Required for the first step of diphthamide biosynthesis, the transfer of 3-amino-3-carboxypropyl from S-adenosyl-L-methionine to a histidine residue. Diphthamide is a post-translational modification of histidine which occurs in elongation factor 2. The protein is Diphthamide biosynthesis protein 4 (dph4) of Schizosaccharomyces pombe (strain 972 / ATCC 24843) (Fission yeast).